The sequence spans 635 residues: Endo-1,4-beta-xylanase B (635 aa).

The region spanning 1-337 is the GH10 domain; sequence MNLKTAYEPY…KEAYYAVLKA (337 aa). Catalysis depends on E150, which acts as the Proton donor. The Nucleophile role is filled by E255.

It belongs to the glycosyl hydrolase 10 (cellulase F) family.

The enzyme catalyses Endohydrolysis of (1-&gt;4)-beta-D-xylosidic linkages in xylans.. The protein operates within glycan degradation; xylan degradation. Functionally, b.fibrisolvens is located in the rumen of ruminant animals, where it contributes to the animal's digestion of plant material by hydrolyzing hemicellulose with its xylanases. This Butyrivibrio fibrisolvens protein is Endo-1,4-beta-xylanase B (xynB).